The following is a 176-amino-acid chain: Calcineurin subunit B type 2 (176 aa).

Residue glycine 2 is the site of N-myristoyl glycine attachment. EF-hand domains are found at residues 18 to 53 (DEIK…QQNP), 57 to 85 (RVID…FSVK), 87 to 122 (DEEQ…MVGN), and 128 to 163 (QLQQ…MEIH). Residues aspartate 31, aspartate 33, serine 35, serine 37, glutamate 42, aspartate 63, aspartate 65, asparagine 67, glutamate 69, glutamate 74, aspartate 100, aspartate 102, aspartate 104, and glutamate 111 each coordinate Ca(2+). The tract at residues 131–136 (QLVDKS) is calcineurin A binding. Ca(2+)-binding residues include aspartate 141, aspartate 143, aspartate 145, arginine 147, and glutamate 152.

It belongs to the calcineurin regulatory subunit family. As to quaternary structure, forms a complex composed of a calmodulin-dependent catalytic subunit (also known as calcineurin A) and a regulatory Ca(2+)-binding subunit (also known as calcineurin B). There are three catalytic subunits, each encoded by a separate gene (PPP3CA, PPP3CB, and PPP3CC) and two regulatory subunits which are also encoded by separate genes (PPP3R1 and PPP3R2). Interacts with SPATA33 (via PQIIIT motif). As to expression, testis specific.

It is found in the mitochondrion. Functionally, regulatory subunit of calcineurin, a calcium-dependent, calmodulin stimulated protein phosphatase. Confers calcium sensitivity. The chain is Calcineurin subunit B type 2 (Ppp3r2) from Rattus norvegicus (Rat).